We begin with the raw amino-acid sequence, 226 residues long: RPA-interacting protein A (226 aa).

Residues M1–G45 are interaction with importin beta. Residues H49–S171 form an interaction with RPA1 region. The segment at C144 to C219 adopts an RIP-type zinc-finger fold.

Interacts directly with the rpa1 subunit of RPA complex. Interacts with importin beta, but not with importin alpha. Forms a complex with the RPA complex and importin beta, which is dissociated by Ran-GTP.

The protein resides in the nucleus. Mediates the import of RPA complex into the nucleus, via its interaction with importin beta. This chain is RPA-interacting protein A (rpain-a), found in Xenopus laevis (African clawed frog).